We begin with the raw amino-acid sequence, 272 residues long: Heat stress transcription factor A-7a (272 aa).

Positions 1 to 26 are disordered; the sequence is MMNPFLPEGCDPPPPPQPMEGLHENA. A DNA-binding region spans residues 27-121; sequence PPPFLTKTFE…LLKNIKRRNP (95 aa). A hydrophobic repeat HR-A/B region spans residues 132–186; the sequence is ACNELRREKQVLMMEIVSLRQQQQTTKSYIKAMEQRIEGTERKQRQMMSFLARAM. Positions 201–216 match the Bipartite nuclear localization signal motif; the sequence is KKIKELEDNESAKRKR. A compositionally biased stretch (basic and acidic residues) spans 203–212; the sequence is IKELEDNESA. The tract at residues 203 to 223 is disordered; it reads IKELEDNESAKRKRGSSSMSE. An AHA motif is present at residues 256–265; it reads DGFWEELLSD.

It belongs to the HSF family. Class A subfamily. Homotrimer. Exhibits temperature-dependent phosphorylation.

Its subcellular location is the nucleus. In terms of biological role, transcriptional activator that specifically binds DNA sequence 5'-AGAAnnTTCT-3' known as heat shock promoter elements (HSE). The polypeptide is Heat stress transcription factor A-7a (HSFA7A) (Arabidopsis thaliana (Mouse-ear cress)).